The sequence spans 758 residues: Spastin (758 aa).

Positions 1–103 (MVRTKNQSSS…SPRSGHHHSY (103 aa)) are disordered. Topologically, residues 1-121 (MVRTKNQSSS…KQNLYVVSFP (121 aa)) are cytoplasmic. An interaction with atl region spans residues 1–159 (MVRTKNQSSS…VIYRPHRRDC (159 aa)). The tract at residues 1–210 (MVRTKNQSSS…RPIQPLEMAA (210 aa)) is required for localization to punctate cytoplasmic foci. Low complexity-rich tracts occupy residues 8–28 (SSSSSASSSSTKSPIKSSSGA), 43–58 (RSSSASNVAAVVAGGS), 66–76 (SSNRRSPGSSP), and 85–95 (TDDLTPTTCSP). Positions 122-142 (IIFLFNVLRSLIYQLFCIFRY) form an intramembrane region, helical. At 143–758 (LYGASTKVIY…WSQDYGDITI (616 aa)) the chain is on the cytoplasmic side. Polar residues-rich tracts occupy residues 169–180 (SKEQQQSLNHPS) and 189–198 (QEQQLSNQPQ). The segment at 169-202 (SKEQQQSLNHPSELNREGDGQEQQLSNQPQRFRP) is disordered. Positions 208–758 (MAANRPGGGY…WSQDYGDITI (551 aa)) are sufficient for interaction with microtubules and microtubule severing. The region spanning 233-308 (HRRAFEYISK…SMARDRLHFL (76 aa)) is the MIT domain. The interval 353–454 (RVRSSGYGPK…GPSGSGASTP (102 aa)) is disordered. Polar residues-rich tracts occupy residues 390-406 (NKSQTLPRNLGSKTSVG) and 425-454 (QFSSGRNTPPQRSRTPINNNGPSGSGASTP). Position 439 is a phosphothreonine (Thr439). A required for interaction with microtubules region spans residues 443–455 (NNGPSGSGASTPV). 523 to 530 (GPPGNGKT) lines the ATP pocket.

This sequence belongs to the AAA ATPase family. Spastin subfamily. In terms of assembly, homohexamer. The homohexamer is stabilized by ATP-binding. The homohexamer may adopt a ring conformation through which microtubules pass prior to being severed. Interacts with microtubules. Interacts with atl; may be involved in microtubule dynamics.

Its subcellular location is the membrane. It is found in the cytoplasm. The protein resides in the cytoskeleton. It localises to the microtubule organizing center. The protein localises to the centrosome. Its subcellular location is the chromosome. It is found in the lipid droplet. It catalyses the reaction n ATP + n H2O + a microtubule = n ADP + n phosphate + (n+1) alpha/beta tubulin heterodimers.. In terms of biological role, ATP-dependent microtubule severing protein. Stimulates microtubule minus-end depolymerization and poleward microtubule flux in the mitotic spindle. Regulates microtubule stability in the neuromuscular junction synapse. Involved in lipid metabolism by regulating the size and distribution of lipid droplets. Involved in axon regeneration by regulating microtubule severing. This chain is Spastin, found in Drosophila melanogaster (Fruit fly).